The sequence spans 105 residues: MKNKIKIRLKSFDHRILDQATKEIVSAIKRTFANINGPIPLPRKIERFTVNRSPHVHKKSREQFEIRKHKRLLVIDDPNPAVVDALSKVDLAAGVDVVIELESGE.

This sequence belongs to the universal ribosomal protein uS10 family. Part of the 30S ribosomal subunit.

Involved in the binding of tRNA to the ribosomes. The protein is Small ribosomal subunit protein uS10 of Rickettsia canadensis (strain McKiel).